The following is a 731-amino-acid chain: Ribonuclease R (731 aa).

In terms of domain architecture, RNB spans 260-589 (RTDLRHFPFF…LHRVIKYLLF (330 aa)). The S1 motif domain maps to 647 to 728 (GCILNGVISN…NEKKIELSLY (82 aa)).

This sequence belongs to the RNR ribonuclease family. RNase R subfamily. As to quaternary structure, monomer.

The protein localises to the cytoplasm. It catalyses the reaction Exonucleolytic cleavage in the 3'- to 5'-direction to yield nucleoside 5'-phosphates.. Its function is as follows. 3'-5' exoribonuclease that releases 5'-nucleoside monophosphates and is involved in maturation of structured RNAs. This chain is Ribonuclease R, found in Buchnera aphidicola subsp. Acyrthosiphon pisum (strain APS) (Acyrthosiphon pisum symbiotic bacterium).